A 1148-amino-acid polypeptide reads, in one-letter code: Maintenance of telomere capping protein 5 (1148 aa).

WD repeat units follow at residues 63–106 (HHIT…SNAI), 112–152 (GHSR…RPFY), 156–195 (SWRS…TPLC), 199–239 (GHVS…TESK), and 299–348 (GHSD…YGKV). Positions 432–543 (EEVSAIGHKF…RFVLGEKVSL (112 aa)) constitute an RWD domain. At Ser759 the chain carries Phosphoserine. Positions 963–990 (THNTLNGSSKFTEPAQKQGSRAISSSPF) are disordered. Positions 964–990 (HNTLNGSSKFTEPAQKQGSRAISSSPF) are enriched in polar residues.

It belongs to the WD repeat WDR59 family. In terms of assembly, component of the SEA complex composed of at least IML1/SEA1, RTC1/SEA2, MTC5/SEA3, NPR2, NPR3, SEA4, SEC13 and SEH1.

It is found in the vacuole membrane. Component of the SEA complex which coats the vacuolar membrane and is involved in intracellular trafficking, autophagy, response to nitrogen starvation, and amino acid biogenesis. May be involved in telomere capping. The chain is Maintenance of telomere capping protein 5 (MTC5) from Saccharomyces cerevisiae (strain ATCC 204508 / S288c) (Baker's yeast).